Consider the following 642-residue polypeptide: Threonine--tRNA ligase (642 aa).

The 61-residue stretch at methionine 1–threonine 61 folds into the TGS domain. The interval aspartate 243–proline 534 is catalytic. Zn(2+)-binding residues include cysteine 334, histidine 385, and histidine 511.

This sequence belongs to the class-II aminoacyl-tRNA synthetase family. Homodimer. The cofactor is Zn(2+).

The protein resides in the cytoplasm. The enzyme catalyses tRNA(Thr) + L-threonine + ATP = L-threonyl-tRNA(Thr) + AMP + diphosphate + H(+). Functionally, catalyzes the attachment of threonine to tRNA(Thr) in a two-step reaction: L-threonine is first activated by ATP to form Thr-AMP and then transferred to the acceptor end of tRNA(Thr). Also edits incorrectly charged L-seryl-tRNA(Thr). The chain is Threonine--tRNA ligase from Proteus mirabilis (strain HI4320).